The following is a 401-amino-acid chain: Tryptophan synthase beta chain (401 aa).

Position 91 is an N6-(pyridoxal phosphate)lysine (Lys-91).

Belongs to the TrpB family. Tetramer of two alpha and two beta chains. Requires pyridoxal 5'-phosphate as cofactor.

The enzyme catalyses (1S,2R)-1-C-(indol-3-yl)glycerol 3-phosphate + L-serine = D-glyceraldehyde 3-phosphate + L-tryptophan + H2O. It functions in the pathway amino-acid biosynthesis; L-tryptophan biosynthesis; L-tryptophan from chorismate: step 5/5. Functionally, the beta subunit is responsible for the synthesis of L-tryptophan from indole and L-serine. This Lactococcus lactis subsp. cremoris (strain MG1363) protein is Tryptophan synthase beta chain.